The primary structure comprises 195 residues: Interferon tau-5 (195 aa).

Residues 1–23 (MAFVLSLLMALVLVSYGPGGSLG) form the signal peptide. 2 disulfide bridges follow: C24-C122 and C52-C162.

The protein belongs to the alpha/beta interferon family. IFN-alphaII subfamily. As to expression, constitutively and exclusively expressed in the mononuclear cells of the extraembryonic trophectoderm.

It localises to the secreted. Paracrine hormone primarily responsible for maternal recognition of pregnancy. Interacts with endometrial receptors, probably type I interferon receptors, and blocks estrogen receptor expression, preventing the estrogen-induced increase in oxytocin receptor expression in the endometrium. This results in the suppression of the pulsatile endometrial release of the luteolytic hormone prostaglandin F2-alpha, hindering the regression of the corpus luteum (luteolysis) and therefore a return to ovarian cyclicity. This, and a possible direct effect of IFN-tau on prostaglandin synthesis, leads in turn to continued ovarian progesterone secretion, which stimulates the secretion by the endometrium of the nutrients required for the growth of the conceptus. In summary, displays particularly high antiviral and antiproliferative potency concurrently with particular weak cytotoxicity, high antiluteolytic activity and immunomodulatory properties. In contrast with other IFNs, IFN-tau is not virally inducible. The protein is Interferon tau-5 (IFNT5) of Ovis aries (Sheep).